The sequence spans 400 residues: MAP kinase-activated protein kinase 2 (400 aa).

Residues 1 to 43 (MLSNSQGQSPPVPFPAPAPPPQPPTPALPHPPAQPPPPPPQQF) are disordered. Residue serine 9 is modified to Phosphoserine. Pro residues predominate over residues 10–42 (PPVPFPAPAPPPQPPTPALPHPPAQPPPPPPQQ). Phosphothreonine is present on threonine 25. The region spanning 64–325 (KVTSQVLGLG…ITEFMNHPWI (262 aa)) is the Protein kinase domain. ATP is bound by residues 70-78 (LGLGINGKV) and lysine 93. 139–141 (ECL) lines the staurosporine pocket. Residue aspartate 186 is the Proton acceptor of the active site. Threonine 222 carries the post-translational modification Phosphothreonine; by MAPK14. A Phosphoserine; by MAPK14 modification is found at serine 272. Serine 328 bears the Phosphoserine; by autocatalysis mark. Positions 328-364 (STKVPQTPLHTSRVLKEDKERWEDVKEEMTSALATMR) are autoinhibitory helix. The residue at position 334 (threonine 334) is a Phosphothreonine; by MAPK14. Lysine 353 is covalently cross-linked (Glycyl lysine isopeptide (Lys-Gly) (interchain with G-Cter in SUMO)). The Nuclear export signal (NES) motif lies at 356 to 365 (MTSALATMRV). A p38 MAPK-binding site region spans residues 366-390 (DYEQIKIKKIEDASNPLLLKRRKKA). Short sequence motifs (bipartite nuclear localization signal) lie at residues 371–374 (KIKK) and 385–389 (KRRKK).

The protein belongs to the protein kinase superfamily. CAMK Ser/Thr protein kinase family. Heterodimer with p38-alpha/MAPK14; this heterodimer forms a stable complex: molecules are positioned 'face to face' so that the ATP-binding sites of both kinases are at the heterodimer interface. Interacts with PHC2. Interacts with HSF1. Sumoylation inhibits the protein kinase activity. In terms of processing, phosphorylated and activated by MAP kinase p38-alpha/MAPK14 at Thr-222, Ser-272 and Thr-334. In terms of tissue distribution, expressed in all tissues examined.

The protein resides in the cytoplasm. It localises to the nucleus. It carries out the reaction L-seryl-[protein] + ATP = O-phospho-L-seryl-[protein] + ADP + H(+). The enzyme catalyses L-threonyl-[protein] + ATP = O-phospho-L-threonyl-[protein] + ADP + H(+). Its activity is regulated as follows. Activated following phosphorylation by p38-alpha/MAPK14 following various stresses. Inhibited following sumoylation. Specifically inhibited by pyrrolopyridine inhibitors. Stress-activated serine/threonine-protein kinase involved in cytokine production, endocytosis, reorganization of the cytoskeleton, cell migration, cell cycle control, chromatin remodeling, DNA damage response and transcriptional regulation. Following stress, it is phosphorylated and activated by MAP kinase p38-alpha/MAPK14, leading to phosphorylation of substrates. Phosphorylates serine in the peptide sequence, Hyd-X-R-X(2)-S, where Hyd is a large hydrophobic residue. Phosphorylates ALOX5, CDC25B, CDC25C, CEP131, ELAVL1, HNRNPA0, HSP27/HSPB1, KRT18, KRT20, LIMK1, LSP1, PABPC1, PARN, PDE4A, RCSD1, RPS6KA3, TAB3 and TTP/ZFP36. Phosphorylates HSF1; leading to the interaction with HSP90 proteins and inhibiting HSF1 homotrimerization, DNA-binding and transactivation activities. Mediates phosphorylation of HSP27/HSPB1 in response to stress, leading to the dissociation of HSP27/HSPB1 from large small heat-shock protein (sHsps) oligomers and impairment of their chaperone activities and ability to protect against oxidative stress effectively. Involved in inflammatory response by regulating tumor necrosis factor (TNF) and IL6 production post-transcriptionally: acts by phosphorylating AU-rich elements (AREs)-binding proteins ELAVL1, HNRNPA0, PABPC1 and TTP/ZFP36, leading to the regulation of the stability and translation of TNF and IL6 mRNAs. Phosphorylation of TTP/ZFP36, a major post-transcriptional regulator of TNF, promotes its binding to 14-3-3 proteins and reduces its ARE mRNA affinity, leading to inhibition of dependent degradation of ARE-containing transcripts. Phosphorylates CEP131 in response to cellular stress induced by ultraviolet irradiation which promotes binding of CEP131 to 14-3-3 proteins and inhibits formation of novel centriolar satellites. Also involved in late G2/M checkpoint following DNA damage through a process of post-transcriptional mRNA stabilization: following DNA damage, relocalizes from nucleus to cytoplasm and phosphorylates HNRNPA0 and PARN, leading to stabilization of GADD45A mRNA. Involved in toll-like receptor signaling pathway (TLR) in dendritic cells: required for acute TLR-induced macropinocytosis by phosphorylating and activating RPS6KA3. The sequence is that of MAP kinase-activated protein kinase 2 (MAPKAPK2) from Homo sapiens (Human).